We begin with the raw amino-acid sequence, 437 residues long: Elongation factor 1-alpha (437 aa).

Positions 4-229 (KPHMNLVVIG…DQLQPPAKPV (226 aa)) constitute a tr-type G domain. Positions 13-20 (GHVDHGKS) are G1. Residue 13–20 (GHVDHGKS) participates in GTP binding. Mg(2+) is bound at residue serine 20. The interval 69–73 (GITID) is G2. Positions 90–93 (DAPG) are G3. Residues 90-94 (DAPGH) and 152-155 (NKMD) each bind GTP. Residues 152 to 155 (NKMD) are G4. Positions 193 to 195 (SAW) are G5.

The protein belongs to the TRAFAC class translation factor GTPase superfamily. Classic translation factor GTPase family. EF-Tu/EF-1A subfamily.

It is found in the cytoplasm. The enzyme catalyses GTP + H2O = GDP + phosphate + H(+). In terms of biological role, GTP hydrolase that promotes the GTP-dependent binding of aminoacyl-tRNA to the A-site of ribosomes during protein biosynthesis. The polypeptide is Elongation factor 1-alpha (Aeropyrum pernix (strain ATCC 700893 / DSM 11879 / JCM 9820 / NBRC 100138 / K1)).